A 444-amino-acid polypeptide reads, in one-letter code: N-succinylarginine dihydrolase (444 aa).

Substrate is bound by residues 19–28 (AGLSFGNVAS), Asn110, and 137–138 (HR). Glu174 is a catalytic residue. Arg214 serves as a coordination point for substrate. The active site involves His250. The substrate site is built by Asp252 and Asn362. Catalysis depends on Cys368, which acts as the Nucleophile.

It belongs to the succinylarginine dihydrolase family. As to quaternary structure, homodimer.

It carries out the reaction N(2)-succinyl-L-arginine + 2 H2O + 2 H(+) = N(2)-succinyl-L-ornithine + 2 NH4(+) + CO2. Its pathway is amino-acid degradation; L-arginine degradation via AST pathway; L-glutamate and succinate from L-arginine: step 2/5. In terms of biological role, catalyzes the hydrolysis of N(2)-succinylarginine into N(2)-succinylornithine, ammonia and CO(2). In Shewanella frigidimarina (strain NCIMB 400), this protein is N-succinylarginine dihydrolase.